A 77-amino-acid polypeptide reads, in one-letter code: Fungal protease inhibitor F (77 aa).

A signal peptide spans 1–22 (MASKNLFVLFFIFALFAANIAA). 4 cysteine pairs are disulfide-bonded: Cys-25–Cys-57, Cys-36–Cys-49, Cys-40–Cys-77, and Cys-59–Cys-71.

The protein belongs to the protease inhibitor I40 family. As to expression, hemolymph.

The protein localises to the secreted. Highly specific for fungal protease and subtilisin. This is Fungal protease inhibitor F from Bombyx mori (Silk moth).